Reading from the N-terminus, the 890-residue chain is DNA mismatch repair protein MutS (890 aa).

An ATP-binding site is contributed by 607 to 614 (GPNMSGKS). A disordered region spans residues 832–851 (ESQLSFFGGEQSSKKQDKPL).

This sequence belongs to the DNA mismatch repair MutS family.

This protein is involved in the repair of mismatches in DNA. It is possible that it carries out the mismatch recognition step. This protein has a weak ATPase activity. The chain is DNA mismatch repair protein MutS from Bacillus cereus (strain B4264).